The sequence spans 323 residues: Glyoxylate/hydroxypyruvate reductase B (323 aa).

Catalysis depends on residues Arg237 and Glu266. The active-site Proton donor is His285.

The protein belongs to the D-isomer specific 2-hydroxyacid dehydrogenase family. GhrB subfamily. Homodimer.

It localises to the cytoplasm. It catalyses the reaction glycolate + NADP(+) = glyoxylate + NADPH + H(+). The enzyme catalyses (R)-glycerate + NAD(+) = 3-hydroxypyruvate + NADH + H(+). It carries out the reaction (R)-glycerate + NADP(+) = 3-hydroxypyruvate + NADPH + H(+). Functionally, catalyzes the NADPH-dependent reduction of glyoxylate and hydroxypyruvate into glycolate and glycerate, respectively. This is Glyoxylate/hydroxypyruvate reductase B from Klebsiella pneumoniae (strain 342).